The chain runs to 176 residues: RNA pyrophosphohydrolase (176 aa).

Residues 6-149 form the Nudix hydrolase domain; it reads GYRPNVGIVI…KRDVYRRVMK (144 aa). Positions 38 to 59 match the Nudix box motif; it reads GGINPGESAEQAMYRELFEEVG.

Belongs to the Nudix hydrolase family. RppH subfamily. A divalent metal cation serves as cofactor.

Accelerates the degradation of transcripts by removing pyrophosphate from the 5'-end of triphosphorylated RNA, leading to a more labile monophosphorylated state that can stimulate subsequent ribonuclease cleavage. In Salmonella paratyphi C (strain RKS4594), this protein is RNA pyrophosphohydrolase.